A 548-amino-acid polypeptide reads, in one-letter code: MDSQRNLLVIALLFVSFMIWQAWEQDKNPQPQAQQTTQTTTTAAGSAADQGVPASGQGKLISVKTDVLDLTINTRGGDVEQALLPAYPKELNSTQPFQLLETSPQFIYQAQSGLTGRDGPDNPANGPRPLYNVEKDAYVLAEGQNELQVPMTYTDAAGNTFTKTFVLKRGDYAVNVNYNVQNAGEKPLEISTFGQLKQSITLPPHLDTGSSNFALHTFRGAAYSTPDEKYEKYKFDTIADNENLNISSKGGWVAMLQQYFATAWIPHNDGTNNFYTANLGNGIAAIGYKSQPVLVQPGQTGAMNSTLWVGPEIQDKMAAVAPHLDLTVDYGWLWFISQPLFKLLKWIHSFVGNWGFSIIIITFIVRGIMYPLTKAQYTSMAKMRMLQPKIQAMRERLGDDKQRISQEMMALYKAEKVNPLGGCFPLLIQMPIFLALYYMLMGSVELRQAPFALWIHDLSAQDPYYILPILMGVTMFFIQKMSPTTVTDPMQQKIMTFMPVIFTVFFLWFPSGLVLYYIVSNLVTIIQQQLIYRGLEKRGLHSREKKKS.

A helical transmembrane segment spans residues 6 to 26; the sequence is NLLVIALLFVSFMIWQAWEQD. The tract at residues 28 to 55 is disordered; it reads NPQPQAQQTTQTTTTAAGSAADQGVPAS. Over residues 30–50 the composition is skewed to low complexity; that stretch reads QPQAQQTTQTTTTAAGSAADQ. The next 4 helical transmembrane spans lie at 350–370, 420–440, 458–478, and 499–519; these read FVGN…GIMY, LGGC…YYML, LSAQ…MFFI, and PVIF…YYIV.

The protein belongs to the OXA1/ALB3/YidC family. Type 1 subfamily. In terms of assembly, interacts with the Sec translocase complex via SecD. Specifically interacts with transmembrane segments of nascent integral membrane proteins during membrane integration.

The protein localises to the cell inner membrane. Required for the insertion and/or proper folding and/or complex formation of integral membrane proteins into the membrane. Involved in integration of membrane proteins that insert both dependently and independently of the Sec translocase complex, as well as at least some lipoproteins. Aids folding of multispanning membrane proteins. The polypeptide is Membrane protein insertase YidC (Escherichia coli O127:H6 (strain E2348/69 / EPEC)).